The following is a 278-amino-acid chain: Putative phosphatase MG265 (278 aa).

Asp9 functions as the Nucleophile in the catalytic mechanism. Residue Asp9 coordinates Mg(2+). Leu10 contacts phosphate. Asp11 provides a ligand contact to Mg(2+). Residues 43–44 (SG) and Lys204 contribute to the phosphate site. Residue Asp227 participates in Mg(2+) binding. A phosphate-binding site is contributed by Asn230.

Belongs to the HAD-like hydrolase superfamily. Cof family. Mg(2+) serves as cofactor.

The polypeptide is Putative phosphatase MG265 (Mycoplasma genitalium (strain ATCC 33530 / DSM 19775 / NCTC 10195 / G37) (Mycoplasmoides genitalium)).